Here is an 83-residue protein sequence, read N- to C-terminus: U5-theraphotoxin-Hs1d (83 aa).

Residues Met-1–Ala-21 form the signal peptide. A propeptide spanning residues Ser-22–Arg-49 is cleaved from the precursor. Disulfide bonds link Cys-51–Cys-63, Cys-56–Cys-68, and Cys-62–Cys-75.

Belongs to the neurotoxin 10 (Hwtx-1) family. 51 (Hntx-8) subfamily. Hntx-8 sub-subfamily. Expressed by the venom gland.

The protein resides in the secreted. Its function is as follows. Agglutinates erythrocytes. This Cyriopagopus schmidti (Chinese bird spider) protein is U5-theraphotoxin-Hs1d.